The primary structure comprises 648 residues: Serine/arginine repetitive matrix protein 3 (648 aa).

A disordered region spans residues 1-44 (MSSTVNNGATGMPAPPDAANGFPQPGASSGSWPRAEEELRAAEP). One can recognise a CWF21 domain in the interval 55–98 (LDHERKRRVELKCMELQEMMEEQGYSEEEIRQKVGTFRQMLMEK). The segment covering 99–109 (EGVLTREDRPG) has biased composition (basic and acidic residues). Disordered stretches follow at residues 99-139 (EGVL…DGPV) and 154-648 (YRTK…SGGF). Basic residues-rich tracts occupy residues 168–186 (PKKK…KKRR), 199–211 (LRKK…KHRR), and 219–243 (RRKR…RKRP). Composition is skewed to low complexity over residues 257 to 276 (SASS…GSPS) and 289 to 317 (TGSQ…NGGS). Basic residues predominate over residues 381-409 (ARRRRRRRRRRRSRSSANAPRRRGRRRTK). Composition is skewed to low complexity over residues 414 to 428 (RGSS…SSSD), 461 to 471 (RPASTSPSPGT), and 493 to 502 (SWSSSRSPSK). Basic and acidic residues predominate over residues 525-544 (LGRDKDSEGRARHAEAEAAR). Over residues 545–560 (TRRRSRSYSPIRKRRR) the composition is skewed to basic residues. The span at 579-648 (IPYYRPSPSS…SRSSSESGGF (70 aa)) shows a compositional bias: low complexity.

This sequence belongs to the CWC21 family.

May play a role in regulating breast cancer cell invasiveness. May be involved in RYBP-mediated breast cancer progression. The sequence is that of Serine/arginine repetitive matrix protein 3 (Srrm3) from Mus musculus (Mouse).